The following is a 664-amino-acid chain: MSLQRIVRVSLEHPTSAVCVAGVETLVDIYGSVPEGTEMFEVYGTPGVDIYISPNMERGRERADTRRWRFDATLEIIVVMNSPSNDLNDSHVQISYHSSHEPLPLAYAVLYLTCVDISLDCDLNCEGRQDRNFVDKRQWVWGPSGYGGILLVNCDRDDPSCDVQDNCDQHVHCLQDLEDMSVMVLRTQGPAALFDDHKLVLHTSSYDAKRAQVFHICGPEDVCEAYRHVLGQDKVSYEVPRLHGDEERFFVEGLSFPDAGFTGLISFHVTLLDDSNEDFSASPIFTDTVVFRVAPWIMTPSTLPPLEVYVCRVRNNTCFVDAVAELARKAGCKLTICPQAENRNDRWIQDEMELGYVQAPHKTLPVVFDSPRNGELQDFPYKRILGPDFGYVTREPRDRSVSGLDSFGNLEVSPPVVANGKEYPLGRILIGGNLPGSSGRRVTQVVRDFLHAQKVQPPVELFVDWLAVGHVDEFLSFVPAPDGKGFRMLLASPGACFKLFQEKQKCGHGRALLFQGVVDDEQVKTISINQVLSNKDLINYNKFVQSCIDWNREVLKRELGLAECDIIDIPQLFKTERKKATAFFPDLVNMLVLGKHLGIPKPFGPIINGCCCLEEKVRSLLEPLGLHCTFIDDFTPYHMLHGEVHCGTNVCRKPFSFKWWNMVP.

Belongs to the protein arginine deiminase family. Ca(2+) is required as a cofactor. In terms of tissue distribution, hair follicles, and epidermis at very low levels.

The protein resides in the cytoplasm. It carries out the reaction L-arginyl-[protein] + H2O = L-citrullyl-[protein] + NH4(+). Functionally, catalyzes the deimination of arginine residues of proteins. This Homo sapiens (Human) protein is Protein-arginine deiminase type-3 (PADI3).